A 94-amino-acid chain; its full sequence is Large ribosomal subunit protein bL27 (94 aa).

Residues 1-10 (MQFLFNIQLF) constitute a propeptide that is removed on maturation.

Belongs to the bacterial ribosomal protein bL27 family. In terms of processing, the N-terminus is cleaved by ribosomal processing cysteine protease Prp.

In Fusobacterium nucleatum subsp. nucleatum (strain ATCC 25586 / DSM 15643 / BCRC 10681 / CIP 101130 / JCM 8532 / KCTC 2640 / LMG 13131 / VPI 4355), this protein is Large ribosomal subunit protein bL27.